We begin with the raw amino-acid sequence, 76 residues long: Esculentin-2-ALb (76 aa).

A signal peptide spans 1 to 22 (MFTMKKSLLLLFFLGTISLSLC). Residues 23-39 (EEERSADEDDGEKGVKR) constitute a propeptide that is removed on maturation. A disulfide bridge links C70 with C76.

As to expression, expressed by the skin glands.

Its subcellular location is the secreted. Functionally, antimicrobial peptide with activity against Gram-positive and Gram-negative bacteria and against fungi. Has been tested against S.aureus (MIC=1.25 ug/mL), B.pumilus (MIC=2.5 ug/mL), B.cereus (MIC=7.5 ug/mL), E.coli (MIC=12.5 ug/mL), B.dysenteriae (MIC=7.5 ug/mL), A.cacoaceticus (MIC=12.5 ug/mL), P.aeruginosa (MIC=50.0 ug/mL) and C.albicans (MIC=2.5 ug/mL). Also shows a weak hemolytic activity. This Amolops loloensis (Lolokou Sucker Frog) protein is Esculentin-2-ALb.